The following is a 597-amino-acid chain: TOX high mobility group box family member 4 (597 aa).

Disordered regions lie at residues 160–224 (GAIL…EPQK) and 520–546 (VQEE…SPQP). A compositionally biased stretch (basic residues) spans 207 to 217 (KPKTPKKKKKK). Residues 212-217 (KKKKKK) carry the Nuclear localization signal motif. The segment at residues 222-290 (PQKPLSAYAL…EYLKALALYK (69 aa)) is a DNA-binding region (HMG box).

In terms of assembly, component of the PNUTS-PP1 phosphatase complex.

The protein localises to the nucleus. The protein resides in the chromosome. In terms of biological role, transcription factor that modulates cell fate reprogramming from the somatic state to the pluripotent and neuronal fate. Also acts as a regulatory component of protein phosphatase 1 (PP1) complexes. Component of the PNUTS-PP1 protein phosphatase complex, a PP1 complex that regulates RNA polymerase II transcription pause-release. PNUTS-PP1 also plays a role in the control of chromatin structure and cell cycle progression during the transition from mitosis into interphase. This is TOX high mobility group box family member 4 (tox4) from Xenopus tropicalis (Western clawed frog).